We begin with the raw amino-acid sequence, 219 residues long: Octanoyltransferase (219 aa).

A BPL/LPL catalytic domain is found at 32 to 207; the sequence is ENSQDEIWIV…TLSQELGLDK (176 aa). Substrate contacts are provided by residues 71-78, 138-140, and 151-153; these read RGGQVTYH, SLG, and GLA. The active-site Acyl-thioester intermediate is the cysteine 169.

It belongs to the LipB family.

The protein localises to the cytoplasm. The enzyme catalyses octanoyl-[ACP] + L-lysyl-[protein] = N(6)-octanoyl-L-lysyl-[protein] + holo-[ACP] + H(+). It participates in protein modification; protein lipoylation via endogenous pathway; protein N(6)-(lipoyl)lysine from octanoyl-[acyl-carrier-protein]: step 1/2. In terms of biological role, catalyzes the transfer of endogenously produced octanoic acid from octanoyl-acyl-carrier-protein onto the lipoyl domains of lipoate-dependent enzymes. Lipoyl-ACP can also act as a substrate although octanoyl-ACP is likely to be the physiological substrate. The polypeptide is Octanoyltransferase (Shewanella pealeana (strain ATCC 700345 / ANG-SQ1)).